Reading from the N-terminus, the 251-residue chain is Triosephosphate isomerase (251 aa).

9–11 (NWK) is a binding site for substrate. His95 functions as the Electrophile in the catalytic mechanism. The active-site Proton acceptor is Glu167. Substrate-binding positions include Gly173, Ser213, and 234–235 (GG). Position 213 is a phosphoserine (Ser213).

Belongs to the triosephosphate isomerase family. Homodimer.

It is found in the cytoplasm. The catalysed reaction is D-glyceraldehyde 3-phosphate = dihydroxyacetone phosphate. It functions in the pathway carbohydrate biosynthesis; gluconeogenesis. The protein operates within carbohydrate degradation; glycolysis; D-glyceraldehyde 3-phosphate from glycerone phosphate: step 1/1. Its function is as follows. Involved in the gluconeogenesis. Catalyzes stereospecifically the conversion of dihydroxyacetone phosphate (DHAP) to D-glyceraldehyde-3-phosphate (G3P). The sequence is that of Triosephosphate isomerase from Bacillus cereus (strain AH820).